Reading from the N-terminus, the 577-residue chain is Arginine--tRNA ligase (577 aa).

The 'HIGH' region motif lies at 122–132; sequence PNVAKEMHVGH.

The protein belongs to the class-I aminoacyl-tRNA synthetase family. As to quaternary structure, monomer.

It is found in the cytoplasm. The catalysed reaction is tRNA(Arg) + L-arginine + ATP = L-arginyl-tRNA(Arg) + AMP + diphosphate. The sequence is that of Arginine--tRNA ligase from Escherichia coli O9:H4 (strain HS).